Here is a 196-residue protein sequence, read N- to C-terminus: Neurensin-1 (196 aa).

Helical transmembrane passes span 67-87 (LISGTVFVILGLTVLAVGFLV) and 121-141 (AVLFCIGGTSMAGCLLMSVFA).

It belongs to the VMP family. In terms of tissue distribution, expressed predominantly in brain. Also weakly expressed in lung and spleen. In brain, expressed strongly in nerve fibers of the cerebral cortex, anterior cerebral nuclei, hypothalamus, amygdaloid complex, brain stem of the metaencephalon and medulla oblongata, and moderately expressed in soma of neurons of the dentate gyrus of the hippocampus and Purkinje cells of the cerebellum.

It localises to the membrane. The protein resides in the cell projection. It is found in the neuron projection. Functionally, may play an important role in neural organelle transport, and in transduction of nerve signals or in nerve growth. May play a role in neurite extension. The polypeptide is Neurensin-1 (Mus musculus (Mouse)).